We begin with the raw amino-acid sequence, 89 residues long: Small ribosomal subunit protein uS15 (89 aa).

This sequence belongs to the universal ribosomal protein uS15 family. In terms of assembly, part of the 30S ribosomal subunit. Forms a bridge to the 50S subunit in the 70S ribosome, contacting the 23S rRNA.

Functionally, one of the primary rRNA binding proteins, it binds directly to 16S rRNA where it helps nucleate assembly of the platform of the 30S subunit by binding and bridging several RNA helices of the 16S rRNA. In terms of biological role, forms an intersubunit bridge (bridge B4) with the 23S rRNA of the 50S subunit in the ribosome. The chain is Small ribosomal subunit protein uS15 from Janthinobacterium sp. (strain Marseille) (Minibacterium massiliensis).